The following is a 373-amino-acid chain: UDP-N-acetylenolpyruvoylglucosamine reductase (373 aa).

Residues 30–203 enclose the FAD-binding PCMH-type domain; it reads LACMADSVVT…SRVGFRLHTD (174 aa). Arg180 is a catalytic residue. Catalysis depends on Ser258, which acts as the Proton donor. Residue Glu356 is part of the active site.

The protein belongs to the MurB family. The cofactor is FAD.

Its subcellular location is the cytoplasm. It carries out the reaction UDP-N-acetyl-alpha-D-muramate + NADP(+) = UDP-N-acetyl-3-O-(1-carboxyvinyl)-alpha-D-glucosamine + NADPH + H(+). It participates in cell wall biogenesis; peptidoglycan biosynthesis. In terms of biological role, cell wall formation. The polypeptide is UDP-N-acetylenolpyruvoylglucosamine reductase (Psychrobacter cryohalolentis (strain ATCC BAA-1226 / DSM 17306 / VKM B-2378 / K5)).